We begin with the raw amino-acid sequence, 284 residues long: Cell division protein DivIB (284 aa).

Residues 1-21 (MFGKRKDSKNKAMRDNEELTP) are disordered. Residues 1–63 (MFGKRKDSKN…GLRKRRLQKR (63 aa)) lie on the Cytoplasmic side of the membrane. The helical transmembrane segment at 64-84 (VITLASIFGISAIISLYAILP) threads the bilayer. The Extracellular portion of the chain corresponds to 85 to 284 (VSRVSNIEIE…VGAYAYPYBK (200 aa)). A POTRA domain is found at 86–156 (SRVSNIEIEG…NVVKFKVTEY (71 aa)).

It belongs to the FtsQ/DivIB family. DivIB subfamily.

It localises to the cell membrane. In terms of biological role, cell division protein that may be involved in stabilizing or promoting the assembly of the division complex. This is Cell division protein DivIB from Ligilactobacillus salivarius (strain CECT 5713) (Lactobacillus salivarius).